A 185-amino-acid chain; its full sequence is GTP cyclohydrolase 1 (185 aa).

Cysteine 75, histidine 78, and cysteine 146 together coordinate Zn(2+).

This sequence belongs to the GTP cyclohydrolase I family. Homomer.

The catalysed reaction is GTP + H2O = 7,8-dihydroneopterin 3'-triphosphate + formate + H(+). Its pathway is cofactor biosynthesis; 7,8-dihydroneopterin triphosphate biosynthesis; 7,8-dihydroneopterin triphosphate from GTP: step 1/1. This is GTP cyclohydrolase 1 from Clostridium kluyveri (strain NBRC 12016).